The primary structure comprises 353 residues: Photosystem II protein D1 (353 aa).

Threonine 2 is modified (N-acetylthreonine). At threonine 2 the chain carries Phosphothreonine. 3 helical membrane-spanning segments follow: residues tyrosine 29–serine 46, histidine 118–leucine 133, and tryptophan 142–alanine 156. Histidine 118 lines the chlorophyll a pocket. Tyrosine 126 contacts pheophytin a. Aspartate 170 and glutamate 189 together coordinate [CaMn4O5] cluster. Residues phenylalanine 197–leucine 218 traverse the membrane as a helical segment. A chlorophyll a-binding site is contributed by histidine 198. A quinone-binding positions include histidine 215 and serine 264–phenylalanine 265. Histidine 215 serves as a coordination point for Fe cation. Histidine 272 lines the Fe cation pocket. A helical membrane pass occupies residues phenylalanine 274–leucine 288. [CaMn4O5] cluster-binding residues include histidine 332, glutamate 333, aspartate 342, and alanine 344. Residues alanine 345–glycine 353 constitute a propeptide that is removed on maturation.

It belongs to the reaction center PufL/M/PsbA/D family. PSII is composed of 1 copy each of membrane proteins PsbA, PsbB, PsbC, PsbD, PsbE, PsbF, PsbH, PsbI, PsbJ, PsbK, PsbL, PsbM, PsbT, PsbX, PsbY, PsbZ, Psb30/Ycf12, at least 3 peripheral proteins of the oxygen-evolving complex and a large number of cofactors. It forms dimeric complexes. The cofactor is The D1/D2 heterodimer binds P680, chlorophylls that are the primary electron donor of PSII, and subsequent electron acceptors. It shares a non-heme iron and each subunit binds pheophytin, quinone, additional chlorophylls, carotenoids and lipids. D1 provides most of the ligands for the Mn4-Ca-O5 cluster of the oxygen-evolving complex (OEC). There is also a Cl(-1) ion associated with D1 and D2, which is required for oxygen evolution. The PSII complex binds additional chlorophylls, carotenoids and specific lipids.. Post-translationally, tyr-161 forms a radical intermediate that is referred to as redox-active TyrZ, YZ or Y-Z. C-terminally processed by CTPA; processing is essential to allow assembly of the oxygen-evolving complex and thus photosynthetic growth.

The protein resides in the plastid. It is found in the chloroplast thylakoid membrane. It carries out the reaction 2 a plastoquinone + 4 hnu + 2 H2O = 2 a plastoquinol + O2. Photosystem II (PSII) is a light-driven water:plastoquinone oxidoreductase that uses light energy to abstract electrons from H(2)O, generating O(2) and a proton gradient subsequently used for ATP formation. It consists of a core antenna complex that captures photons, and an electron transfer chain that converts photonic excitation into a charge separation. The D1/D2 (PsbA/PsbD) reaction center heterodimer binds P680, the primary electron donor of PSII as well as several subsequent electron acceptors. The chain is Photosystem II protein D1 from Nandina domestica (Heavenly bamboo).